The sequence spans 233 residues: Purine nucleoside phosphorylase DeoD-type (233 aa).

Histidine 4 is a binding site for a purine D-ribonucleoside. Residues glycine 20, arginine 24, arginine 43, and 87–90 (RVGT) contribute to the phosphate site. A purine D-ribonucleoside contacts are provided by residues 179–181 (EME) and 203–204 (SD). Residue aspartate 204 is the Proton donor of the active site.

The protein belongs to the PNP/UDP phosphorylase family. In terms of assembly, homohexamer; trimer of homodimers.

It carries out the reaction a purine D-ribonucleoside + phosphate = a purine nucleobase + alpha-D-ribose 1-phosphate. The catalysed reaction is a purine 2'-deoxy-D-ribonucleoside + phosphate = a purine nucleobase + 2-deoxy-alpha-D-ribose 1-phosphate. Catalyzes the reversible phosphorolytic breakdown of the N-glycosidic bond in the beta-(deoxy)ribonucleoside molecules, with the formation of the corresponding free purine bases and pentose-1-phosphate. This Clostridium novyi (strain NT) protein is Purine nucleoside phosphorylase DeoD-type.